The following is a 303-amino-acid chain: BAG family molecular chaperone regulator 3 (303 aa).

Over residues 1–11 (MMKMNTGTSPS) the composition is skewed to polar residues. The tract at residues 1–27 (MMKMNTGTSPSVIGGGTSGNEWESRPG) is disordered. The Ubiquitin-like domain maps to 45–119 (FRVRVKYGSV…LVVKEDPISQ (75 aa)). Positions 138–216 (SISDISFEVD…KYVEALDLLK (79 aa)) constitute a BAG domain. The tract at residues 249–268 (VEEEEEEPRNSNASSSSGTP) is disordered. The segment covering 258 to 267 (NSNASSSSGT) has biased composition (polar residues). The residue at position 263 (Ser-263) is a Phosphoserine.

In terms of assembly, binds to the ATPase domain of HSP70/HSC70 chaperones. Interacts with HSP70-1.

Co-chaperone that regulates diverse cellular pathways, such as programmed cell death and stress responses. This chain is BAG family molecular chaperone regulator 3 (BAG3), found in Arabidopsis thaliana (Mouse-ear cress).